We begin with the raw amino-acid sequence, 246 residues long: Small ribosomal subunit protein uS2 (246 aa).

The segment at 225–246 (SKSSASVPNKDEYVAAEDGAAE) is disordered.

The protein belongs to the universal ribosomal protein uS2 family.

In Cellvibrio japonicus (strain Ueda107) (Pseudomonas fluorescens subsp. cellulosa), this protein is Small ribosomal subunit protein uS2.